The sequence spans 587 residues: Monocopper oxidase-like protein SKU5 (587 aa).

Positions 1-20 (MDLFKILLLVFFVNISFCFA) are cleaved as a signal peptide. 2 N-linked (GlcNAc...) asparagine glycosylation sites follow: N14 and N58. H80 provides a ligand contact to Cu cation. N-linked (GlcNAc...) asparagine glycans are attached at residues N107, N169, N200, N257, N278, N293, N342, N362, N430, and N444. H452 is a binding site for Cu cation. N534 carries N-linked (GlcNAc...) asparagine glycosylation. The GPI-anchor amidated serine moiety is linked to residue S562. Positions 563–587 (ASKSIGFTSLSMVVMALVMMMMLQH) are cleaved as a propeptide — removed in mature form.

This sequence belongs to the multicopper oxidase family. Requires Cu cation as cofactor. As to expression, expressed in roots, hypocotyls, cotyledons, leaves, stems and flowers.

It is found in the secreted. The protein resides in the cell wall. The protein localises to the cell membrane. In terms of biological role, may be a monocopper oxidase of unknown specificity. Involved in directional growth processes, possibly by participating in cell wall expansion. This is Monocopper oxidase-like protein SKU5 (SKU5) from Arabidopsis thaliana (Mouse-ear cress).